We begin with the raw amino-acid sequence, 114 residues long: uncharacterized protein (114 aa).

A disordered region spans residues 1-37; sequence MLKKILSLFKKEEPKTEEKPTEVEEKKEEREEKEEKK. Basic and acidic residues predominate over residues 9 to 37; that stretch reads FKKEEPKTEEKPTEVEEKKEEREEKEEKK.

This is an uncharacterized protein from Aquifex aeolicus (strain VF5).